The following is a 172-amino-acid chain: Stellate protein CG33237 (172 aa).

It belongs to the casein kinase 2 subunit beta family. Interacts in vitro with the casein kinase 2 alpha subunit (CkII-alpha). The relevance of such interaction is however unclear in vivo. As to expression, probably not expressed in wild-type flies. In males lacking the Y chromosome, it is testis-specific and constitutes the main component of star-shaped crystals.

Functionally, unknown. In males lacking the Y chromosome, its strong overexpression leads to the appearance of proteinaceous star-shaped crystals in the primary spermatocytes causing meiotic drive, possibly by interfering with normal casein kinase 2 activity. The sequence is that of Stellate protein CG33237 (Ste:CG33237) from Drosophila melanogaster (Fruit fly).